A 301-amino-acid chain; its full sequence is Leucine-rich repeat-containing protein 30 (301 aa).

LRR repeat units lie at residues 72 to 93 (EVQKLNLSHNQLRVLPPEVGKL), 95 to 116 (RIVVLNLCGNRLKSLPREVSLL), 118 to 139 (CLKVLFVNMNCLTEVPAELSLC), 141 to 163 (KLEVLSLSHNCLSQLPACFADLS), 164 to 185 (RLRKLNLSNNFFAHIPMCVFSL), 187 to 208 (ELIFLHVGSNRLENIAESIQHL), 210 to 231 (SLQIFIAEGNNIHSFPRSLCLV), 233 to 254 (SLELLNLNNNDIQTLPSELHLL), and 265 to 287 (MDKGLHISHNPLSKPLPELVEGG).

This is Leucine-rich repeat-containing protein 30 (LRRC30) from Homo sapiens (Human).